A 434-amino-acid polypeptide reads, in one-letter code: MASFVIEGGHRLSGEIHPQGAKNEVLQIICATLLTAEEVTVNNIPDILDVNNLIQLMRDMGVTVAKTGVDSYSFKAANVDLAYLESDNFLKKCSSLRGSVMLIGPMVARFGKAMISKPGGDKIGRRRLDTHFIGIQNLGADFTYNEEREIYEISAEELKGTSMLLDEASVTGTANIVMAAVLAKGKTTIYNAACEPYLQQLCKMLNRMGAKISGIASNLLTIEGVEELHGTDHTVLPDMIEVGSFIGMAAMTRSEITIKNVSYENLGIIPESFRRLGIKLEQRGDDIFVPAQDCYQIESFIDGSIMTIADAPWPGLTPDLLSVMLVVATQAKGSVLIHQKMFESRLFFVDKLIDMGAQIILCDPHRAVVIGHNHGFTLRGGNMTSPDIRAGIALLIAAMSAEGISRIHNIEQIDRGYQNIEGRLNAIGARITRI.

Residue 22–23 (KN) coordinates phosphoenolpyruvate. Residue Arg-97 coordinates UDP-N-acetyl-alpha-D-glucosamine. Asp-121 (proton donor) is an active-site residue. The UDP-N-acetyl-alpha-D-glucosamine site is built by Asp-319 and Met-341.

Belongs to the EPSP synthase family. MurA subfamily.

It localises to the cytoplasm. The enzyme catalyses phosphoenolpyruvate + UDP-N-acetyl-alpha-D-glucosamine = UDP-N-acetyl-3-O-(1-carboxyvinyl)-alpha-D-glucosamine + phosphate. It functions in the pathway cell wall biogenesis; peptidoglycan biosynthesis. In terms of biological role, cell wall formation. Adds enolpyruvyl to UDP-N-acetylglucosamine. The sequence is that of UDP-N-acetylglucosamine 1-carboxyvinyltransferase from Bacteroides fragilis (strain ATCC 25285 / DSM 2151 / CCUG 4856 / JCM 11019 / LMG 10263 / NCTC 9343 / Onslow / VPI 2553 / EN-2).